The primary structure comprises 386 residues: GLABROUS1 enhancer-binding protein-like 1 (386 aa).

2 disordered regions span residues 1-58 (MVTP…KKKK) and 197-314 (ESGE…DDDD). The span at 216–226 (EEIRDNDETAR) shows a compositional bias: basic and acidic residues. Residues 221–285 (NDETARKAQQ…LKEHEEVANT (65 aa)) are a coiled coil. Polar residues predominate over residues 257–267 (DNNGTTQIAQQ). Low complexity predominate over residues 291–300 (NGAAKTTENG). The interval 354 to 375 (LSDEWKALCVEERRLNIKKLRF) is non-canonical leucine-zipper.

The protein belongs to the GeBP family. Homo- and heterodimers. Interacts with GEBP, GPL2 and GPL3. Interacts with GEBP. As to expression, expressed in the apical meristem and young leaf primordia. Detected in the vascular tissues of cotyledons and leaves, in hydathodes and at the base of flowers and siliques, but not in roots.

The protein localises to the nucleus. Probable transcription factor. May play redundant roles with GEBP and GPL2 in cytokinin responses by regulating the transcript levels of type-A ARR response genes. Involved in stress responses. Plays a repressive role in cell expansion by counteracting the positive role of CPR5 in this process, but does not regulate cell proliferation or endoreduplication. The polypeptide is GLABROUS1 enhancer-binding protein-like 1 (Arabidopsis thaliana (Mouse-ear cress)).